A 112-amino-acid chain; its full sequence is Protein BEX3 (112 aa).

The tract at residues 1–45 (MANIHQENEEMEQPVQNGEEDRPLGGGEGHQPERNHRRGQARRLA) is disordered. An interaction with p75NTR/NGFR region spans residues 69–94 (EIFMEEMREIRRKLRELQLRNCLRIL). Residues 69–112 (EIFMEEMREIRRKLRELQLRNCLRILMGELSNHHDHHDEFCLMP) form an interaction with 14-3-3 epsilon region. The Nuclear export signal motif lies at 78–88 (IRRKLRELQLR). Residues 101 to 105 (HHDHH) are his cluster. Cysteine 109 lines the Zn(2+) pocket.

This sequence belongs to the BEX family. As to quaternary structure, self-associates. Binds to the DEATH domain of p75NTR/NGFR. Interacts with 14-3-3 epsilon (YWHAE). Interacts with DIABLO/SMAC. Ubiquitinated. Degraded by the proteasome.

Its subcellular location is the nucleus. The protein localises to the cytoplasm. The protein resides in the cytosol. Its function is as follows. May be a signaling adapter molecule involved in NGFR/p75NTR-mediated apoptosis induced by NGF. Plays a role in zinc-triggered neuronal death. In absence of reductive stress, acts as a pseudosubstrate for the CRL2(FEM1B) complex: associates with FEM1B via zinc, thereby preventing association between FEM1B and its substrates. This chain is Protein BEX3, found in Bos taurus (Bovine).